A 328-amino-acid polypeptide reads, in one-letter code: Probable cell division protein WhiA (328 aa).

Residues 275–308 constitute a DNA-binding region (H-T-H motif); the sequence is SLEELGQLASPPMTKDAVAGRIRRLLSMADKRAE.

Belongs to the WhiA family.

Its function is as follows. Involved in cell division and chromosome segregation. The protein is Probable cell division protein WhiA of Corynebacterium urealyticum (strain ATCC 43042 / DSM 7109).